Reading from the N-terminus, the 695-residue chain is Elongation factor G (695 aa).

A tr-type G domain is found at 12–286 (DKIRNIGIMA…AVIDYLPSPL (275 aa)). GTP-binding positions include 21 to 28 (AHIDAGKT), 85 to 89 (DTPGH), and 139 to 142 (NKMD).

This sequence belongs to the TRAFAC class translation factor GTPase superfamily. Classic translation factor GTPase family. EF-G/EF-2 subfamily.

Its subcellular location is the cytoplasm. Its function is as follows. Catalyzes the GTP-dependent ribosomal translocation step during translation elongation. During this step, the ribosome changes from the pre-translocational (PRE) to the post-translocational (POST) state as the newly formed A-site-bound peptidyl-tRNA and P-site-bound deacylated tRNA move to the P and E sites, respectively. Catalyzes the coordinated movement of the two tRNA molecules, the mRNA and conformational changes in the ribosome. In Thermotoga neapolitana (strain ATCC 49049 / DSM 4359 / NBRC 107923 / NS-E), this protein is Elongation factor G.